We begin with the raw amino-acid sequence, 578 residues long: Dapdiamide synthesis protein DdaD (578 aa).

One can recognise a Carrier domain in the interval 498 to 573 (ESISATEHQI…KMAAWLDASS (76 aa)). The residue at position 533 (Ser533) is an O-(pantetheine 4'-phosphoryl)serine.

Belongs to the ATP-dependent AMP-binding enzyme family. Pantetheine 4'-phosphate serves as cofactor.

It functions in the pathway antibiotic biosynthesis. Functionally, involved in dapdiamide antibiotics biosynthesis. Activates and sequesters N-beta-fumaramoyl-DAP as a covalently tethered thioester for subsequent oxidative modification of the fumaramoyl group. This is Dapdiamide synthesis protein DdaD from Enterobacter agglomerans (Erwinia herbicola).